A 289-amino-acid chain; its full sequence is ADP-dependent (S)-NAD(P)H-hydrate dehydratase (289 aa).

The YjeF C-terminal domain maps to 9 to 286 (VTAAALRAQP…PEVPGILDRL (278 aa)). (6S)-NADPHX-binding residues include A44 and H160. AMP-binding positions include 197–201 (KGADS) and G226. D227 is a binding site for (6S)-NADPHX.

The protein belongs to the NnrD/CARKD family. In terms of assembly, homotetramer. Requires Mg(2+) as cofactor.

It catalyses the reaction (6S)-NADHX + ADP = AMP + phosphate + NADH + H(+). The catalysed reaction is (6S)-NADPHX + ADP = AMP + phosphate + NADPH + H(+). Its function is as follows. Catalyzes the dehydration of the S-form of NAD(P)HX at the expense of ADP, which is converted to AMP. Together with NAD(P)HX epimerase, which catalyzes the epimerization of the S- and R-forms, the enzyme allows the repair of both epimers of NAD(P)HX, a damaged form of NAD(P)H that is a result of enzymatic or heat-dependent hydration. This chain is ADP-dependent (S)-NAD(P)H-hydrate dehydratase, found in Xanthomonas campestris pv. campestris (strain ATCC 33913 / DSM 3586 / NCPPB 528 / LMG 568 / P 25).